A 791-amino-acid chain; its full sequence is Protein FAM47A (791 aa).

3 disordered regions span residues 195–257 (PVSH…TRRR), 274–409 (EDAR…TGVC), and 449–573 (VKKT…SEPP). 2 stretches are compositionally biased toward basic and acidic residues: residues 274–288 (EDAR…KTTD) and 333–342 (GESHLRLEHS). Residues 349-358 (SLRSEPSETG) are compositionally biased toward polar residues. The segment covering 449–462 (VKKTKEPTEPHKSP) has biased composition (basic and acidic residues).

It belongs to the FAM47 family.

The sequence is that of Protein FAM47A (FAM47A) from Homo sapiens (Human).